The chain runs to 91 residues: DNA-directed RNA polymerase subunit omega (91 aa).

Belongs to the RNA polymerase subunit omega family. As to quaternary structure, the RNAP catalytic core consists of 2 alpha, 1 beta, 1 beta' and 1 omega subunit. When a sigma factor is associated with the core the holoenzyme is formed, which can initiate transcription. The rRNA transcription and antitermination complex (rrnTAC) consists of RNAP, NusA, NusB, NusE (rpsJ), NusG, SubB, ribosomal protein S4, DNA and precursor rRNA; S4 is more flexible than other subunits.

The catalysed reaction is RNA(n) + a ribonucleoside 5'-triphosphate = RNA(n+1) + diphosphate. In terms of biological role, promotes RNA polymerase (RNAP) assembly. Latches the N- and C-terminal regions of the beta' subunit thereby facilitating its interaction with the beta and alpha subunits. Functionally, part of the processive rRNA transcription and antitermination complex (rrnTAC). The complex forms an RNA-chaperone ring around the RNA exit tunnel of RNAP. It supports rapid transcription and antitermination of rRNA operons, cotranscriptional rRNA folding, and annealing of distal rRNA regions to allow correct ribosome biogenesis. In Escherichia coli (strain K12), this protein is DNA-directed RNA polymerase subunit omega (rpoZ).